The sequence spans 184 residues: Protein GrpE (184 aa).

It belongs to the GrpE family. As to quaternary structure, homodimer.

It localises to the cytoplasm. Its function is as follows. Participates actively in the response to hyperosmotic and heat shock by preventing the aggregation of stress-denatured proteins, in association with DnaK and GrpE. It is the nucleotide exchange factor for DnaK and may function as a thermosensor. Unfolded proteins bind initially to DnaJ; upon interaction with the DnaJ-bound protein, DnaK hydrolyzes its bound ATP, resulting in the formation of a stable complex. GrpE releases ADP from DnaK; ATP binding to DnaK triggers the release of the substrate protein, thus completing the reaction cycle. Several rounds of ATP-dependent interactions between DnaJ, DnaK and GrpE are required for fully efficient folding. The protein is Protein GrpE of Pseudomonas putida (strain GB-1).